A 242-amino-acid chain; its full sequence is Polycomb group RING finger protein 3 (242 aa).

The RING-type zinc finger occupies 17–56 (CRLCSGYLIDATTVTECLHTFCRSCLVKYLEENNTCPTCR). The interval 115–149 (AKQHLDSHRNGETKADDSSNKEAAEEKPEEDNDYH) is disordered. Positions 117–140 (QHLDSHRNGETKADDSSNKEAAEE) are enriched in basic and acidic residues. The interval 132–242 (SSNKEAAEEK…LHYRPKMDLL (111 aa)) is interaction with BCORL1.

As to quaternary structure, component of a PRC1-like complex that contains PCGF3, RNF2 and RYBP. Interacts with CBX6, CBX7 and CBX8. Interacts with BCORL1.

The protein localises to the nucleus. Its subcellular location is the nucleoplasm. Component of a Polycomb group (PcG) multiprotein PRC1-like complex, a complex class required to maintain the transcriptionally repressive state of many genes, including Hox genes, throughout development. PcG PRC1 complex acts via chromatin remodeling and modification of histones; it mediates monoubiquitination of histone H2A 'Lys-119', rendering chromatin heritably changed in its expressibility. Within the PRC1-like complex, regulates RNF2 ubiquitin ligase activity. Plays a redundant role with PCGF5 as part of a PRC1-like complex that mediates monoubiquitination of histone H2A 'Lys-119' on the X chromosome and is required for normal silencing of one copy of the X chromosome in XX females. The sequence is that of Polycomb group RING finger protein 3 (PCGF3) from Homo sapiens (Human).